Consider the following 432-residue polypeptide: Adenylosuccinate synthetase (432 aa).

GTP-binding positions include 13 to 19 (GDEGKGK) and 41 to 43 (GHT). Catalysis depends on Asp14, which acts as the Proton acceptor. The Mg(2+) site is built by Asp14 and Gly41. Residues 14-17 (DEGK), 39-42 (NAGH), Thr130, Arg144, Gln225, Thr240, and Arg304 each bind IMP. Catalysis depends on His42, which acts as the Proton donor. 300–306 (ATTGRKR) is a substrate binding site. GTP-binding positions include Arg306, 332–334 (KLD), and 415–417 (STG).

The protein belongs to the adenylosuccinate synthetase family. In terms of assembly, homodimer. It depends on Mg(2+) as a cofactor.

It is found in the cytoplasm. It catalyses the reaction IMP + L-aspartate + GTP = N(6)-(1,2-dicarboxyethyl)-AMP + GDP + phosphate + 2 H(+). The protein operates within purine metabolism; AMP biosynthesis via de novo pathway; AMP from IMP: step 1/2. Functionally, plays an important role in the de novo pathway of purine nucleotide biosynthesis. Catalyzes the first committed step in the biosynthesis of AMP from IMP. This is Adenylosuccinate synthetase from Vibrio cholerae serotype O1 (strain M66-2).